Here is a 141-residue protein sequence, read N- to C-terminus: Large ribosomal subunit protein uL11 (141 aa).

Belongs to the universal ribosomal protein uL11 family. As to quaternary structure, part of the ribosomal stalk of the 50S ribosomal subunit. Interacts with L10 and the large rRNA to form the base of the stalk. L10 forms an elongated spine to which L12 dimers bind in a sequential fashion forming a multimeric L10(L12)X complex. One or more lysine residues are methylated.

In terms of biological role, forms part of the ribosomal stalk which helps the ribosome interact with GTP-bound translation factors. This chain is Large ribosomal subunit protein uL11, found in Gloeothece citriformis (strain PCC 7424) (Cyanothece sp. (strain PCC 7424)).